The primary structure comprises 75 residues: Small ribosomal subunit protein bS18 (75 aa).

Belongs to the bacterial ribosomal protein bS18 family. In terms of assembly, part of the 30S ribosomal subunit. Forms a tight heterodimer with protein bS6.

Functionally, binds as a heterodimer with protein bS6 to the central domain of the 16S rRNA, where it helps stabilize the platform of the 30S subunit. This chain is Small ribosomal subunit protein bS18, found in Cereibacter sphaeroides (strain KD131 / KCTC 12085) (Rhodobacter sphaeroides).